Consider the following 198-residue polypeptide: Ribonuclease HII (198 aa).

Positions 9 to 198 (ITVAGADEAG…LLPDQLKIDF (190 aa)) constitute an RNase H type-2 domain. 3 residues coordinate a divalent metal cation: D15, E16, and D107.

Belongs to the RNase HII family. It depends on Mn(2+) as a cofactor. Mg(2+) is required as a cofactor.

The protein resides in the cytoplasm. It carries out the reaction Endonucleolytic cleavage to 5'-phosphomonoester.. Its function is as follows. Endonuclease that specifically degrades the RNA of RNA-DNA hybrids. The polypeptide is Ribonuclease HII (Christiangramia forsetii (strain DSM 17595 / CGMCC 1.15422 / KT0803) (Gramella forsetii)).